Here is a 216-residue protein sequence, read N- to C-terminus: GTP-binding nuclear protein spi1 (216 aa).

Residues 6–170 form the Small GTPase Ran-type domain; the sequence is NVPTFKLVLV…LWLARKLVGN (165 aa). 17-24 is a GTP binding site; it reads DGGTGKTT. A Phosphothreonine modification is found at threonine 20. The interval 36-44 is switch-I; sequence KKYIATLGV. Residues glycine 67, 121–124, and 149–151 contribute to the GTP site; these read NKVD and SAK. Residues 67-83 are switch-II; that stretch reads GQEKLGGLRDGYYIQGQ.

This sequence belongs to the small GTPase superfamily. Ran family. Oligomer of dis3, pim1 and spi1. Found in a nuclear export complex with RanGTP, exportin and pre-miRNA. Interacts with fft3.

It is found in the nucleus. Functionally, GTP-binding protein involved in nucleocytoplasmic transport. Required for the import of protein into the nucleus and also for RNA export. The sequence is that of GTP-binding nuclear protein spi1 (spi1) from Schizosaccharomyces pombe (strain 972 / ATCC 24843) (Fission yeast).